Consider the following 433-residue polypeptide: Glutamate-rich protein 2 (433 aa).

Disordered stretches follow at residues 56-86 (VPAAGTAPAPPPPRALRPAPGPPRSAPLAPP), 113-161 (DSAS…KHPQ), 189-273 (SRQN…SIET), 308-344 (CLEDIEENLSDSTDGDGEEDSNNEDDEGPAKKETRAP), and 394-433 (EKAQEEEEEEESDEDSSSESEVDSSEDGSEDSSDECEDGS). Residues 63–85 (PAPPPPRALRPAPGPPRSAPLAP) are compositionally biased toward pro residues. The segment covering 114 to 127 (SASQARGSEPSSSA) has biased composition (polar residues). Composition is skewed to basic and acidic residues over residues 199 to 214 (DPKEKLMSGSNKEKPQ) and 244 to 258 (ARKETSSKKIEDKVS). Residues 259 to 273 (LKSSENRPSSRSIET) are compositionally biased toward polar residues. Acidic residues-rich tracts occupy residues 308-334 (CLEDIEENLSDSTDGDGEEDSNNEDDE) and 397-433 (QEEEEEEESDEDSSSESEVDSSEDGSEDSSDECEDGS).

The chain is Glutamate-rich protein 2 (Erich2) from Rattus norvegicus (Rat).